We begin with the raw amino-acid sequence, 272 residues long: Cell shape-determining protein MreC (272 aa).

Residues 1–8 (MNRFKKSK) lie on the Cytoplasmic side of the membrane. The chain crosses the membrane as a helical span at residues 9–29 (YVIIVFVTVLLVSALLATTYS). At 30-272 (STIVTKLGDG…VDVIELVGNS (243 aa)) the chain is on the extracellular side. A coiled-coil region spans residues 64 to 112 (LTRTYNENESLKKQLYQLEVKSNEVESLKTENEQLRQLLDMKSKLQATK).

It belongs to the MreC family. As to quaternary structure, homodimer. Interacts with a number of proteins in the elongasome, including PBP1a (pbpA), PBP1b, PBP2a, PBP2b (penA), StkP, MltG, MreD and RodZ.

It is found in the cell membrane. Functionally, involved in formation and maintenance of cell shape, probably part of the elongasome which synthesizes peripheral peptidoglycan (PG). This chain is Cell shape-determining protein MreC, found in Streptococcus pneumoniae (strain ATCC BAA-255 / R6).